The chain runs to 378 residues: Probable endopolygalacturonase NFIA_008150 (378 aa).

Residues 1–19 form the signal peptide; that stretch reads MLKLIGSLVLLASAAEVIA. Residues 20 to 35 constitute a propeptide that is removed on maturation; that stretch reads SPLAESVAPSITLEKR. Cys38 and Cys56 are oxidised to a cystine. 3 PbH1 repeats span residues 147–169, 170–200, and 201–222; these read TSSS…SING, CDGL…DIGS, and SSNI…AVNS. Residue Asp215 is the Proton donor of the active site. A disulfide bridge links Cys217 with Cys233. Residue His237 is part of the active site. PbH1 repeat units follow at residues 247 to 273 and 281 to 303; these read RSDN…RIKA and IKGI…LIEQ. The N-linked (GlcNAc...) asparagine glycan is linked to Asn254. N-linked (GlcNAc...) asparagine glycosylation occurs at Asn327. 2 cysteine pairs are disulfide-bonded: Cys345-Cys350 and Cys369-Cys378.

This sequence belongs to the glycosyl hydrolase 28 family.

The protein resides in the secreted. The enzyme catalyses (1,4-alpha-D-galacturonosyl)n+m + H2O = (1,4-alpha-D-galacturonosyl)n + (1,4-alpha-D-galacturonosyl)m.. Involved in maceration and soft-rotting of plant tissue. Hydrolyzes the 1,4-alpha glycosidic bonds of de-esterified pectate in the smooth region of the plant cell wall. This Neosartorya fischeri (strain ATCC 1020 / DSM 3700 / CBS 544.65 / FGSC A1164 / JCM 1740 / NRRL 181 / WB 181) (Aspergillus fischerianus) protein is Probable endopolygalacturonase NFIA_008150.